Consider the following 221-residue polypeptide: Protein myomaker (221 aa).

The Extracellular segment spans residues Met-1 to Thr-3. A helical transmembrane segment spans residues Val-4–Ile-24. Topologically, residues Ala-25 to Arg-29 are cytoplasmic. Residues Phe-30–Cys-50 form a helical membrane-spanning segment. At Asp-51–Asp-64 the chain is on the extracellular side. Residues Ile-65–Leu-85 form a helical membrane-spanning segment. Topologically, residues Ala-86–Arg-93 are cytoplasmic. Residues Ser-94–His-110 traverse the membrane as a helical segment. The Extracellular portion of the chain corresponds to Asp-111–Trp-113. A helical membrane pass occupies residues Gly-114–Leu-134. The Cytoplasmic portion of the chain corresponds to Lys-135–Gln-153. A helical membrane pass occupies residues Ile-154–Trp-174. A topological domain (extracellular) is located at residue Asp-175. A helical membrane pass occupies residues Tyr-176 to Pro-196. The Cytoplasmic portion of the chain corresponds to Lys-197–Val-221. S-palmitoyl cysteine attachment occurs at residues Cys-217 and Cys-218.

Belongs to the TMEM8 family. As to quaternary structure, interacts with MYMX. Post-translationally, palmitoylated at the C-terminus; palmitoylation promotes localization to the Golgi apparatus. As to expression, specifically expressed in skeletal muscle during embryogenesis and adult muscle regeneration.

Its subcellular location is the cell membrane. The protein resides in the golgi apparatus membrane. Myoblast-specific protein that mediates myoblast fusion, an essential step for the formation of multi-nucleated muscle fibers. Actively participates in the membrane fusion reaction by mediating the mixing of cell membrane lipids (hemifusion) upstream of MYMX. Acts independently of MYMX. Involved in skeletal muscle regeneration in response to injury by mediating the fusion of satellite cells, a population of muscle stem cells, with injured myofibers. Also involved in skeletal muscle hypertrophy, probably by mediating the fusion of satellite cells with myofibers. This chain is Protein myomaker, found in Mus musculus (Mouse).